The following is a 122-amino-acid chain: Large ribosomal subunit protein uL14c (122 aa).

It belongs to the universal ribosomal protein uL14 family. As to quaternary structure, part of the 50S ribosomal subunit.

It is found in the plastid. It localises to the chloroplast. In terms of biological role, binds to 23S rRNA. The sequence is that of Large ribosomal subunit protein uL14c from Psilotum nudum (Whisk fern).